The chain runs to 529 residues: Cytochrome P450 monooxygenase okaD (529 aa).

The chain crosses the membrane as a helical span at residues 13–35; sequence LPAQHLLASLALVGALLSVGYLL. Residue Cys435 participates in heme binding.

This sequence belongs to the cytochrome P450 family. It depends on heme as a cofactor.

The protein localises to the membrane. It carries out the reaction okaramine C + 2 reduced [NADPH--hemoprotein reductase] + 2 O2 = okaramine A + 2 oxidized [NADPH--hemoprotein reductase] + 4 H2O + 2 H(+). It functions in the pathway alkaloid biosynthesis. Functionally, cytochrome P450 monooxygenase; part of the gene cluster that mediates the biosynthesis of okaramine B, a prenylated indole alkaloid that possesses an unusual octacyclic ring system, including a four-membered azetidine ring and an eight-membered azocine ring, and that exhibits insecticidal activity against silkworm larvae. Within the pathway, okaD likely catalyzes a key step in forming the eight-membered ring of okaramine A using as substrate okaramine C. The biosynthesis begins with the NRPS okaA that condenses two tryptophan molecules into cyclo(L-Trp-L-Trp). Prenylation by the prenyltransferase okaC then leads to the formation of cyclo(N8-(alpha,alpha-dimethylallyl)-L-Trp-6a-(alpha,alpha-dime-thylallyl)-L-Trp). This is followed by indole 2,3-epoxidation by the FAD-dependent monooxygenase okaB to facilitate the formation of the hexahydropyrrolo[2,3-b]indole (HPI) moiety of okaramine C. The cytochrome P450 monooxygenase okaD then likely catalyzes formation of the eight-membered ring of okaramine A. The dioxygenase okaE further forms the unusual 2-dimethyl-3-methyl-azetidine ring to yield 12-deshydroxyl okaramine E, as well as the hydroxylation of 12-deshydroxyl okaramine E to produce okaramine E. The cytochrome P450 monoxygenase okaG converts 12-deshydroxyl okaramine E into 3-desmethyl okaramine B which is further methylated by the methyltransferase okaF into okaramine B. In a shunt pathway, okaG and okaF together are also able to convert okaramine E into okaramine D. Okaramine H is produced by nonenzymatic conversion from okaramine A. In Penicillium ochrochloron, this protein is Cytochrome P450 monooxygenase okaD.